A 449-amino-acid polypeptide reads, in one-letter code: Bifunctional protein GlmU (449 aa).

Residues 1–225 (MLSVAILAAG…NGELQGINNR (225 aa)) form a pyrophosphorylase region. UDP-N-acetyl-alpha-D-glucosamine contacts are provided by residues 7–10 (LAAG), K21, Q73, and 78–79 (GT). Residue D103 participates in Mg(2+) binding. Positions 140, 154, 169, and 223 each coordinate UDP-N-acetyl-alpha-D-glucosamine. N223 provides a ligand contact to Mg(2+). The linker stretch occupies residues 226-246 (IHLSECEECIQNSIKEKHMLN). Residues 247–449 (GVTFINKASC…NIENWKKKKS (203 aa)) are N-acetyltransferase. UDP-N-acetyl-alpha-D-glucosamine contacts are provided by R328 and K346. H358 serves as the catalytic Proton acceptor. Residues Y361 and N372 each contribute to the UDP-N-acetyl-alpha-D-glucosamine site. Acetyl-CoA contacts are provided by A375, A418, and R435.

It in the N-terminal section; belongs to the N-acetylglucosamine-1-phosphate uridyltransferase family. The protein in the C-terminal section; belongs to the transferase hexapeptide repeat family. In terms of assembly, homotrimer. The cofactor is Mg(2+).

Its subcellular location is the cytoplasm. The catalysed reaction is alpha-D-glucosamine 1-phosphate + acetyl-CoA = N-acetyl-alpha-D-glucosamine 1-phosphate + CoA + H(+). It carries out the reaction N-acetyl-alpha-D-glucosamine 1-phosphate + UTP + H(+) = UDP-N-acetyl-alpha-D-glucosamine + diphosphate. It functions in the pathway nucleotide-sugar biosynthesis; UDP-N-acetyl-alpha-D-glucosamine biosynthesis; N-acetyl-alpha-D-glucosamine 1-phosphate from alpha-D-glucosamine 6-phosphate (route II): step 2/2. It participates in nucleotide-sugar biosynthesis; UDP-N-acetyl-alpha-D-glucosamine biosynthesis; UDP-N-acetyl-alpha-D-glucosamine from N-acetyl-alpha-D-glucosamine 1-phosphate: step 1/1. The protein operates within bacterial outer membrane biogenesis; LPS lipid A biosynthesis. Catalyzes the last two sequential reactions in the de novo biosynthetic pathway for UDP-N-acetylglucosamine (UDP-GlcNAc). The C-terminal domain catalyzes the transfer of acetyl group from acetyl coenzyme A to glucosamine-1-phosphate (GlcN-1-P) to produce N-acetylglucosamine-1-phosphate (GlcNAc-1-P), which is converted into UDP-GlcNAc by the transfer of uridine 5-monophosphate (from uridine 5-triphosphate), a reaction catalyzed by the N-terminal domain. The protein is Bifunctional protein GlmU of Prochlorococcus marinus (strain AS9601).